The primary structure comprises 531 residues: Tryptophan 6-halogenase ThaL (531 aa).

FAD is bound by residues G13, T15, A16, A39, I42, I45, V47, and A50. K79 is a catalytic residue. P111 is an L-tryptophan binding site. 2 residues coordinate FAD: M198 and L349. The chloride site is built by S360 and G361. I362 contributes to the FAD binding site. L-tryptophan-binding residues include Y454, Y455, E461, and F465.

Belongs to the flavin-dependent halogenase family. Bacterial tryptophan halogenase subfamily. As to quaternary structure, homodimer. Monomer in solution.

The enzyme catalyses L-tryptophan + FADH2 + chloride + O2 = 6-chloro-L-tryptophan + FAD + 2 H2O. It carries out the reaction D-tryptophan + FADH2 + chloride + O2 = 6-chloro-D-tryptophan + FAD + 2 H2O. Functionally, involved in the biosynthesis of thienodolin, a plant growth-regulating compound. Catalyzes the chlorination of tryptophan (Trp) at C6 position to yield 6-chloro-tryptophan. It is also able to use bromide ions to generate monobrominated Trp. In vitro, accepts a wide range of amides and peptides carrying either L- or D-Trp at the N-terminus. The protein is Tryptophan 6-halogenase ThaL of Streptomyces albogriseolus.